The primary structure comprises 407 residues: Phosphopentomutase (407 aa).

Mn(2+) is bound by residues D10, D306, H311, D347, H348, and H359.

It belongs to the phosphopentomutase family. Requires Mn(2+) as cofactor.

The protein resides in the cytoplasm. It catalyses the reaction 2-deoxy-alpha-D-ribose 1-phosphate = 2-deoxy-D-ribose 5-phosphate. It carries out the reaction alpha-D-ribose 1-phosphate = D-ribose 5-phosphate. It participates in carbohydrate degradation; 2-deoxy-D-ribose 1-phosphate degradation; D-glyceraldehyde 3-phosphate and acetaldehyde from 2-deoxy-alpha-D-ribose 1-phosphate: step 1/2. Functionally, isomerase that catalyzes the conversion of deoxy-ribose 1-phosphate (dRib-1-P) and ribose 1-phosphate (Rib-1-P) to deoxy-ribose 5-phosphate (dRib-5-P) and ribose 5-phosphate (Rib-5-P), respectively. The protein is Phosphopentomutase of Salmonella arizonae (strain ATCC BAA-731 / CDC346-86 / RSK2980).